The following is a 323-amino-acid chain: o-succinylbenzoate synthase (323 aa).

Lys-134 serves as the catalytic Proton donor. Positions 162, 191, and 214 each coordinate Mg(2+). Residue Lys-236 is the Proton acceptor of the active site.

It belongs to the mandelate racemase/muconate lactonizing enzyme family. MenC type 1 subfamily. A divalent metal cation is required as a cofactor.

The catalysed reaction is (1R,6R)-6-hydroxy-2-succinyl-cyclohexa-2,4-diene-1-carboxylate = 2-succinylbenzoate + H2O. It participates in quinol/quinone metabolism; 1,4-dihydroxy-2-naphthoate biosynthesis; 1,4-dihydroxy-2-naphthoate from chorismate: step 4/7. It functions in the pathway quinol/quinone metabolism; menaquinone biosynthesis. Its function is as follows. Converts 2-succinyl-6-hydroxy-2,4-cyclohexadiene-1-carboxylate (SHCHC) to 2-succinylbenzoate (OSB). The protein is o-succinylbenzoate synthase of Pectobacterium atrosepticum (strain SCRI 1043 / ATCC BAA-672) (Erwinia carotovora subsp. atroseptica).